Here is a 210-residue protein sequence, read N- to C-terminus: MGQKVNPIGFRLGVIKSWDSKWYAEADYAKLLHEDLKIRAFLKKRLYSSGISKIEIERAANKTKINIYTARPGLIIGKKGSEVETIKKELSNLTSKEIFINIIEVRKPELDAQLVAENVALQLERRIAFRRAMKKSVTSALKFGAKGIRITCSGRLGGAEMSRTEWYREGRVPLHTLRADIDYGCAEAKTTYGLIGIKVLIFKGEVLPGH.

In terms of domain architecture, KH type-2 spans 38–106 (IRAFLKKRLY…EIFINIIEVR (69 aa)).

The protein belongs to the universal ribosomal protein uS3 family. Part of the 30S ribosomal subunit. Forms a tight complex with proteins S10 and S14.

In terms of biological role, binds the lower part of the 30S subunit head. Binds mRNA in the 70S ribosome, positioning it for translation. The polypeptide is Small ribosomal subunit protein uS3 (Pelobacter propionicus (strain DSM 2379 / NBRC 103807 / OttBd1)).